A 907-amino-acid polypeptide reads, in one-letter code: Aldehyde oxidoreductase (907 aa).

Residues 2–79 (IQKVITVNGI…GAQITTIEGV (78 aa)) form the 2Fe-2S ferredoxin-type domain. [2Fe-2S] cluster is bound by residues C40, C45, C48, C60, C100, C103, C137, and C139. Mo-molybdopterin cytosine dinucleotide-binding residues include H653 and E869.

This sequence belongs to the xanthine dehydrogenase family. Homodimer. It depends on Mo-molybdopterin cytosine dinucleotide as a cofactor. The cofactor is [2Fe-2S] cluster.

It catalyses the reaction an aldehyde + A + H2O = a carboxylate + AH2 + H(+). The protein is Aldehyde oxidoreductase (mop) of Megalodesulfovibrio gigas (Desulfovibrio gigas).